The sequence spans 473 residues: Ribosomal RNA small subunit methyltransferase F (473 aa).

S-adenosyl-L-methionine contacts are provided by residues 124-130 (ASAPGSK), Glu148, Asp175, and Asp193. Cys246 (nucleophile) is an active-site residue.

Belongs to the class I-like SAM-binding methyltransferase superfamily. RsmB/NOP family.

The protein localises to the cytoplasm. The catalysed reaction is cytidine(1407) in 16S rRNA + S-adenosyl-L-methionine = 5-methylcytidine(1407) in 16S rRNA + S-adenosyl-L-homocysteine + H(+). Specifically methylates the cytosine at position 1407 (m5C1407) of 16S rRNA. The chain is Ribosomal RNA small subunit methyltransferase F from Aliivibrio salmonicida (strain LFI1238) (Vibrio salmonicida (strain LFI1238)).